A 720-amino-acid polypeptide reads, in one-letter code: MSSRTNVVGIDFGNSKTVIAVARNRAIDVIVNEVSNRSTPSLVSYGERSRFLGEAAKSAEASNFRNTVGSLKRLAGRTYDDPEIKDIESNFISAKLTEVDGFVGAKVQYLNEETAFSNIQLIAAYFTKIKAIAEAELIGSVSDVVISIPAWFTDIQRRALLEAANIAGLNPLRLMNDNAAAALTYGITKTDLPEPESPRRVAIVDFGHSNYSVSIVEFSRGQFHIKSTVCDRNLGSRNMDKALIDYFAAEFKEKYKIDVLSNPKATFRLATAVERLKKVLSANANAPLNVEMIMNDIDASSFIKRSDFEELIKPLLERLTPPIEKALELAGIKKEDLYSIEMVGGCTRVPIVKEVIANYFGKGLSFTLNQDEAVARGCALSCAILSPVFRVREFHVHDVTTYPITFSWEPIPENPEEDSSLEVFSEGNPIPSTKILTFYRKAPFKLLAAYSKEAQLPGSIKQNIAQYLINDVVPNKDGDLSIVKIKVRLDLHGILVVEQAYIVEEQEVEEPVETSPEEEAEKKTDEPVKMRKVKKLVKVADLSVSVQEDRLPTEVLEKYREAEHQMIATDKLVAETVDRKNALEEYIYDTRAKLDDIYAPFTNEEESSKFKEMLTKAEDWLYEEGEDTTKAVYTAKLEDLMRVGGPIRQRYLDAEEAKRQKVQAEREAAKAATKSEAEKQKPSGKFEEGTGGRAPPPPPAEEVAPENEEVETMEIDEQKE.

Serine 38 carries the post-translational modification Phosphoserine. Residue threonine 39 is modified to Phosphothreonine. Positions 658–690 (KRQKVQAEREAAKAATKSEAEKQKPSGKFEEGT) are enriched in basic and acidic residues. Residues 658–720 (KRQKVQAERE…ETMEIDEQKE (63 aa)) form a disordered region. Over residues 703 to 720 (VAPENEEVETMEIDEQKE) the composition is skewed to acidic residues.

Belongs to the heat shock protein 70 family.

Its subcellular location is the cytoplasm. In terms of biological role, required for normal growth at various temperatures. This is Heat shock protein homolog pss1 (pss1) from Schizosaccharomyces pombe (strain 972 / ATCC 24843) (Fission yeast).